Reading from the N-terminus, the 909-residue chain is Aconitate hydratase A (909 aa).

The [4Fe-4S] cluster site is built by Cys450, Cys516, and Cys519.

This sequence belongs to the aconitase/IPM isomerase family. In terms of assembly, monomer. [4Fe-4S] cluster is required as a cofactor.

It catalyses the reaction citrate = D-threo-isocitrate. The catalysed reaction is 3-hydroxybutane-1,2,3-tricarboxylate = 2-methyl-cis-aconitate + H2O. Its pathway is carbohydrate metabolism; tricarboxylic acid cycle; isocitrate from oxaloacetate: step 2/2. Its function is as follows. Involved in both the tricarboxylic acid (TCA) and methylcitric acid cycles. Catalyzes the reversible isomerization of citrate to isocitrate via cis-aconitate. Also catalyzes the rehydration of 2-methyl-cis-aconitate to produce 2-methylisocitrate. The apo form of AcnA functions as a RNA-binding regulatory protein which plays a role in the regulation of citrate concentration and in the sporulation. To prevent the accumulation of excessive levels of citrate, it binds near the 5' end of the citZ mRNA, decreasing its stability and thereby limiting the concentration of citrate synthase in the cell. Aconitase also binds to the gerE transcript late in sporulation and stabilizes it for translation, thereby increasing the rate and level of GerE protein accumulation. This chain is Aconitate hydratase A (citB), found in Bacillus subtilis (strain 168).